Consider the following 294-residue polypeptide: Picrinine-N-methytransferase TMT2 (294 aa).

The segment at 75 to 84 (LLDVGCGLGG) is SAM motif I. The Vacuolar targeting signal motif lies at 137–143 (DGEFDVV). Residues 138-146 (GEFDVVFTL) form an SAM motif II region. The segment at 165–174 (VGSPGAAIVV) is SAM motif III.

This sequence belongs to the class I-like SAM-binding methyltransferase superfamily. gTMT family. As to quaternary structure, homodimer.

The protein localises to the vacuole membrane. The enzyme catalyses picrinine + S-adenosyl-L-methionine = ervincine + S-adenosyl-L-homocysteine + H(+). The protein operates within alkaloid biosynthesis; vindoline biosynthesis. S-adenosyl-L-methionine-dependent N-methyltransferase involved in the biosynthesis of biologically active monoterpenoid indole alkaloids (MIAs) natural products including vindoline. Catalyzes the conversion of picrinine to N-methylpicrinine (ervincine). This Catharanthus roseus (Madagascar periwinkle) protein is Picrinine-N-methytransferase TMT2.